We begin with the raw amino-acid sequence, 86 residues long: MAHKKAGGSTRNGRDSESKRLGVKRFGGQNVLAGNILVRQRGTHFHAGENVGLGKDHTLFAKADGQVVFERKGPRNRRYVSVRTVQ.

A disordered region spans residues methionine 1–valine 23.

It belongs to the bacterial ribosomal protein bL27 family.

This Alkalilimnicola ehrlichii (strain ATCC BAA-1101 / DSM 17681 / MLHE-1) protein is Large ribosomal subunit protein bL27.